A 950-amino-acid chain; its full sequence is Leucine--tRNA ligase 2 (950 aa).

Positions 47-57 (PYPNSPFHLGH) match the 'HIGH' region motif. Positions 631–635 (KMSKS) match the 'KMSKS' region motif. ATP is bound at residue K634.

It belongs to the class-I aminoacyl-tRNA synthetase family.

The protein localises to the cytoplasm. The enzyme catalyses tRNA(Leu) + L-leucine + ATP = L-leucyl-tRNA(Leu) + AMP + diphosphate. This is Leucine--tRNA ligase 2 from Metallosphaera sedula (strain ATCC 51363 / DSM 5348 / JCM 9185 / NBRC 15509 / TH2).